The sequence spans 153 residues: Insulin-like growth factor 1 (153 aa).

Residues 49–77 (GPETLCGAELVDALQFVCGDRGFYFNKPT) are b. Cystine bridges form between Cys-54–Cys-96, Cys-66–Cys-109, and Cys-95–Cys-100. Positions 78–89 (GYGSSSRRAPQT) are c. Positions 90-110 (GIVDECCFRSCDLRRLEMYCA) are a. The segment at 111-118 (PLKPAKSA) is d. A propeptide spans 119 to 153 (RSVRAQRHTDMPKAQKEVHLKNASRGSAGNKNYRM) (e peptide). Positions 120-153 (SVRAQRHTDMPKAQKEVHLKNASRGSAGNKNYRM) are disordered. The span at 125–138 (RHTDMPKAQKEVHL) shows a compositional bias: basic and acidic residues. The span at 142 to 153 (SRGSAGNKNYRM) shows a compositional bias: polar residues.

Belongs to the insulin family. As to quaternary structure, forms a ternary complex with IGFR1 and ITGAV:ITGB3. Forms a ternary complex with IGFR1 and ITGA6:ITGB4. Forms a ternary complex with IGFBP3 and ALS.

It localises to the secreted. Its function is as follows. The insulin-like growth factors, isolated from plasma, are structurally and functionally related to insulin but have a much higher growth-promoting activity. May be a physiological regulator of [1-14C]-2-deoxy-D-glucose (2DG) transport and glycogen synthesis in osteoblasts. Stimulates glucose transport in bone-derived osteoblastic (PyMS) cells and is effective at much lower concentrations than insulin, not only regarding glycogen and DNA synthesis but also with regard to enhancing glucose uptake. May play a role in synapse maturation. Ca(2+)-dependent exocytosis of IGF1 is required for sensory perception of smell in the olfactory bulb. Acts as a ligand for IGF1R. Binds to the alpha subunit of IGF1R, leading to the activation of the intrinsic tyrosine kinase activity which autophosphorylates tyrosine residues in the beta subunit thus initiating a cascade of down-stream signaling events leading to activation of the PI3K-AKT/PKB and the Ras-MAPK pathways. Binds to integrins ITGAV:ITGB3 and ITGA6:ITGB4. Its binding to integrins and subsequent ternary complex formation with integrins and IGFR1 are essential for IGF1 signaling. Induces the phosphorylation and activation of IGFR1, MAPK3/ERK1, MAPK1/ERK2 and AKT1. As part of the MAPK/ERK signaling pathway, acts as a negative regulator of apoptosis in cardiomyocytes via promotion of STUB1/CHIP-mediated ubiquitination and degradation of ICER-type isoforms of CREM. The chain is Insulin-like growth factor 1 from Panthera tigris altaica (Siberian tiger).